Consider the following 572-residue polypeptide: Proline dehydrogenase 1, mitochondrial (572 aa).

The span at 105–124 shows a compositional bias: low complexity; the sequence is NHSNQTNNVNNKNYNNNNNN. Positions 105–140 are disordered; it reads NHSNQTNNVNNKNYNNNNNNFEKDDKFGPPNNQNNN.

It belongs to the proline oxidase family. FAD serves as cofactor.

The protein localises to the mitochondrion matrix. The enzyme catalyses L-proline + a quinone = (S)-1-pyrroline-5-carboxylate + a quinol + H(+). It participates in amino-acid degradation; L-proline degradation into L-glutamate; L-glutamate from L-proline: step 1/2. Functionally, converts proline to delta-1-pyrroline-5-carboxylate. In Dictyostelium discoideum (Social amoeba), this protein is Proline dehydrogenase 1, mitochondrial (prodh).